Reading from the N-terminus, the 218-residue chain is Glycerol-3-phosphate acyltransferase (218 aa).

5 helical membrane-spanning segments follow: residues 10–30 (LTLG…FGLI), 60–80 (DLAA…VLLA), 88–108 (PAII…PVWL), 125–145 (SAAW…AFLF), and 165–185 (AFDQ…LIFI).

It belongs to the PlsY family. In terms of assembly, probably interacts with PlsX.

The protein localises to the cell inner membrane. It catalyses the reaction an acyl phosphate + sn-glycerol 3-phosphate = a 1-acyl-sn-glycero-3-phosphate + phosphate. It participates in lipid metabolism; phospholipid metabolism. Functionally, catalyzes the transfer of an acyl group from acyl-phosphate (acyl-PO(4)) to glycerol-3-phosphate (G3P) to form lysophosphatidic acid (LPA). This enzyme utilizes acyl-phosphate as fatty acyl donor, but not acyl-CoA or acyl-ACP. The polypeptide is Glycerol-3-phosphate acyltransferase (Caulobacter vibrioides (strain ATCC 19089 / CIP 103742 / CB 15) (Caulobacter crescentus)).